Consider the following 342-residue polypeptide: Inositol-tetrakisphosphate 1-kinase 5 (342 aa).

Lys25 and Lys67 together coordinate 1D-myo-inositol 1,3,4-trisphosphate. The ATP site is built by Arg102 and Lys154. 1D-myo-inositol 1,3,4-trisphosphate is bound by residues His165 and Lys197. Residues Gln186 to Lys197 and Ser212 each bind ATP. Mg(2+) contacts are provided by Asp283, Asp298, and Asn300. Residue Asn300 coordinates 1D-myo-inositol 1,3,4-trisphosphate.

It belongs to the ITPK1 family. In terms of assembly, monomer. It depends on Mg(2+) as a cofactor. Expressed in roots, leaves, flowers, anthers and embryos.

The enzyme catalyses 1D-myo-inositol 3,4,5,6-tetrakisphosphate + ATP = 1D-myo-inositol 1,3,4,5,6-pentakisphosphate + ADP + H(+). The catalysed reaction is 1D-myo-inositol 1,3,4-trisphosphate + ATP = 1D-myo-inositol 1,3,4,5-tetrakisphosphate + ADP + H(+). It carries out the reaction 1D-myo-inositol 1,3,4-trisphosphate + ATP = 1D-myo-inositol 1,3,4,6-tetrakisphosphate + ADP + H(+). Its function is as follows. Kinase that can phosphorylate various inositol polyphosphate such as Ins(3,4,5,6)P4 or Ins(1,3,4)P3 and participates in phytic acid biosynthesis in developing seeds. Phytic acid is the primary storage form of phosphorus in cereal grains and other plant seeds. In Oryza sativa subsp. japonica (Rice), this protein is Inositol-tetrakisphosphate 1-kinase 5 (ITPK5).